Reading from the N-terminus, the 233-residue chain is Antilisterial bacteriocin subtilosin biosynthesis protein AlbG (233 aa).

6 helical membrane-spanning segments follow: residues 7-27, 46-66, 116-136, 145-165, 176-198, and 203-220; these read FTLL…VQAV, GLLA…LHYV, TYVM…FEIV, TPPA…LFCM, GSLF…MLSF, and LLFL…SFIY.

It localises to the cell membrane. Involved in the production of the bacteriocin subtilosin. This is Antilisterial bacteriocin subtilosin biosynthesis protein AlbG (albG) from Bacillus subtilis (strain 168).